The following is a 231-amino-acid chain: ATP phosphoribosyltransferase (231 aa).

It belongs to the ATP phosphoribosyltransferase family. Short subfamily. Heteromultimer composed of HisG and HisZ subunits.

The protein resides in the cytoplasm. The catalysed reaction is 1-(5-phospho-beta-D-ribosyl)-ATP + diphosphate = 5-phospho-alpha-D-ribose 1-diphosphate + ATP. It participates in amino-acid biosynthesis; L-histidine biosynthesis; L-histidine from 5-phospho-alpha-D-ribose 1-diphosphate: step 1/9. Catalyzes the condensation of ATP and 5-phosphoribose 1-diphosphate to form N'-(5'-phosphoribosyl)-ATP (PR-ATP). Has a crucial role in the pathway because the rate of histidine biosynthesis seems to be controlled primarily by regulation of HisG enzymatic activity. The polypeptide is ATP phosphoribosyltransferase (Brucella ovis (strain ATCC 25840 / 63/290 / NCTC 10512)).